The following is a 444-amino-acid chain: Chromosomal replication initiator protein DnaA (444 aa).

The segment at 1 to 73 (MDSSAQQLWH…AEVVQDIVGY (73 aa)) is domain I, interacts with DnaA modulators. A domain II region spans residues 73–104 (YPVEIQLTAQQGDLIAIFQPHTSLESELSPTN). The domain III, AAA+ region stretch occupies residues 105-321 (QLNPKYNFSR…GALIRATTYI (217 aa)). ATP is bound by residues G149, G151, K152, and T153. A domain IV, binds dsDNA region spans residues 322-444 (SISGLPMTVE…ERINSLSRNQ (123 aa)).

Belongs to the DnaA family. Oligomerizes as a right-handed, spiral filament on DNA at oriC.

The protein localises to the cytoplasm. Functionally, plays an essential role in the initiation and regulation of chromosomal replication. ATP-DnaA binds to the origin of replication (oriC) to initiate formation of the DNA replication initiation complex once per cell cycle. Binds the DnaA box (a 9 base pair repeat at the origin) and separates the double-stranded (ds)DNA. Forms a right-handed helical filament on oriC DNA; dsDNA binds to the exterior of the filament while single-stranded (ss)DNA is stabiized in the filament's interior. The ATP-DnaA-oriC complex binds and stabilizes one strand of the AT-rich DNA unwinding element (DUE), permitting loading of DNA polymerase. After initiation quickly degrades to an ADP-DnaA complex that is not apt for DNA replication. Binds acidic phospholipids. In Microcystis aeruginosa (strain NIES-843 / IAM M-2473), this protein is Chromosomal replication initiator protein DnaA.